Consider the following 1517-residue polypeptide: DNA-directed RNA polymerase subunit beta' (1517 aa).

4 residues coordinate Zn(2+): Cys-71, Cys-73, Cys-86, and Cys-89. Asp-482, Asp-484, and Asp-486 together coordinate Mg(2+). Positions 812, 886, 893, and 896 each coordinate Zn(2+).

It belongs to the RNA polymerase beta' chain family. As to quaternary structure, the RNAP catalytic core consists of 2 alpha, 1 beta, 1 beta' and 1 omega subunit. When a sigma factor is associated with the core the holoenzyme is formed, which can initiate transcription. The cofactor is Mg(2+). Zn(2+) is required as a cofactor.

The catalysed reaction is RNA(n) + a ribonucleoside 5'-triphosphate = RNA(n+1) + diphosphate. Its function is as follows. DNA-dependent RNA polymerase catalyzes the transcription of DNA into RNA using the four ribonucleoside triphosphates as substrates. The chain is DNA-directed RNA polymerase subunit beta' from Campylobacter jejuni (strain RM1221).